We begin with the raw amino-acid sequence, 70 residues long: Small ribosomal subunit protein bS21 (70 aa).

Belongs to the bacterial ribosomal protein bS21 family.

In Chromobacterium violaceum (strain ATCC 12472 / DSM 30191 / JCM 1249 / CCUG 213 / NBRC 12614 / NCIMB 9131 / NCTC 9757 / MK), this protein is Small ribosomal subunit protein bS21.